Consider the following 104-residue polypeptide: Urease subunit beta (104 aa).

Belongs to the urease beta subunit family. In terms of assembly, heterotrimer of UreA (gamma), UreB (beta) and UreC (alpha) subunits. Three heterotrimers associate to form the active enzyme.

It localises to the cytoplasm. The enzyme catalyses urea + 2 H2O + H(+) = hydrogencarbonate + 2 NH4(+). It functions in the pathway nitrogen metabolism; urea degradation; CO(2) and NH(3) from urea (urease route): step 1/1. The protein is Urease subunit beta of Synechococcus sp. (strain RCC307).